Consider the following 167-residue polypeptide: Seroin (167 aa).

The first 17 residues, 1-17, serve as a signal peptide directing secretion; the sequence is MATKILIFLSFVALSSA. N26 carries an N-linked (GlcNAc...) asparagine glycan. 5 consecutive repeat copies span residues 38 to 46, 56 to 64, 76 to 78, 79 to 81, and 82 to 84. The interval 145 to 167 is disordered; sequence VNETIVGDNPPKFEESRKESSSN. A glycan (N-linked (GlcNAc...) asparagine) is linked at N146. A compositionally biased stretch (basic and acidic residues) spans 155 to 167; sequence PKFEESRKESSSN.

Produced by both the posterior (PSG) and middle (MSG) sections of silk glands.

It is found in the secreted. The sequence is that of Seroin from Galleria mellonella (Greater wax moth).